A 756-amino-acid polypeptide reads, in one-letter code: Phosphate transporter PHO1 homolog 6 (756 aa).

The SPX domain maps to 1 to 303 (MKFGKDFSSE…SRDAAKSYMK (303 aa)). Residues 1-355 (MKFGKDFSSE…KPKRERHRLT (355 aa)) lie on the Cytoplasmic side of the membrane. Residues 356–376 (FSTGFLGGCMFSLIVALVAIV) form a helical membrane-spanning segment. Over 377 to 396 (RTRNILQDDGQKQYMNTMFP) the chain is Extracellular. Residues 397-417 (LYSLFGFIMLHMTMYAANIYF) traverse the membrane as a helical segment. Residues 418 to 440 (WRQYRVNYSFIFGFKQGTELGYK) are Cytoplasmic-facing. A helical transmembrane segment spans residues 441 to 461 (QVLFVGFSIGALALLCVLANL). Topologically, residues 462 to 477 (DMETDPKTKDYQALTE) are extracellular. Residues 478–498 (LLPLFLLIAMFVVLVVPFNIF) form a helical membrane-spanning segment. The Cytoplasmic portion of the chain corresponds to 499–631 (YRSSRFFFLT…DEKDRQIIWR (133 aa)). In terms of domain architecture, EXS spans 562–756 (KDSQVFNTFL…SLPFNYEVDH (195 aa)). Residues 632–652 (LLGGITSAMAVVFCTYWDLVY) traverse the membrane as a helical segment. Topologically, residues 653–676 (DWGLLNRTSKNPWLRDNLLIPHKE) are extracellular. Residues 677-697 (VYVLAMILNVVLRFAWMQTVL) traverse the membrane as a helical segment. Residues 698–756 (DFKFESIHTQTVVAVVASLEIIRRGIWNFFRLENEHLNNVGKYRAFKAVSLPFNYEVDH) are Cytoplasmic-facing.

Belongs to the SYG1 (TC 2.A.94) family. As to expression, specifically expressed in anther connective tissue.

Its subcellular location is the cell membrane. In terms of biological role, may transport inorganic phosphate (Pi). The protein is Phosphate transporter PHO1 homolog 6 (PHO1-H6) of Arabidopsis thaliana (Mouse-ear cress).